The sequence spans 169 residues: Ribosomal RNA large subunit methyltransferase H (169 aa).

S-adenosyl-L-methionine-binding positions include Leu85, Gly117, and 136–141; that span reads LGELTW.

It belongs to the RNA methyltransferase RlmH family. Homodimer.

It localises to the cytoplasm. It carries out the reaction pseudouridine(1915) in 23S rRNA + S-adenosyl-L-methionine = N(3)-methylpseudouridine(1915) in 23S rRNA + S-adenosyl-L-homocysteine + H(+). Specifically methylates the pseudouridine at position 1915 (m3Psi1915) in 23S rRNA. This Brucella abortus biovar 1 (strain 9-941) protein is Ribosomal RNA large subunit methyltransferase H.